The chain runs to 187 residues: UPF0340 protein SPJ_0612 (187 aa).

This sequence belongs to the UPF0340 family.

The chain is UPF0340 protein SPJ_0612 from Streptococcus pneumoniae (strain JJA).